The chain runs to 409 residues: uncharacterized protein (409 aa).

A run of 4 helical transmembrane segments spans residues 20–40, 283–303, 344–364, and 372–392; these read ILTM…VSML, FALL…IGVM, IGGI…TVIF, and IPAV…FGLL.

This sequence belongs to the ABC-4 integral membrane protein family.

The protein resides in the cell membrane. This is an uncharacterized protein from Bacillus subtilis (strain 168).